The chain runs to 227 residues: Glutathione S-transferase U17 (227 aa).

In terms of domain architecture, GST N-terminal spans 4-83 (SDVKLIGAWA…YIDDTWSSSG (80 aa)). Glutathione is bound by residues 14–15 (SP), 40–41 (SK), 54–55 (KI), and 67–68 (ES). The 133-residue stretch at 90–222 (DPYDRAMARF…KLAEFAKKIF (133 aa)) folds into the GST C-terminal domain.

The protein belongs to the GST superfamily. Tau family.

The protein localises to the cytoplasm. It localises to the cytosol. The catalysed reaction is RX + glutathione = an S-substituted glutathione + a halide anion + H(+). Its function is as follows. Involved in light signaling, mainly phyA-mediated photomorphogenesis and in the integration of various phytohormone signals to modulate various aspects of plant development by affecting glutathione pools. In vitro, possesses glutathione S-transferase activity toward 1-chloro-2,4-dinitrobenzene (CDNB) and benzyl isothiocyanate (BITC). The sequence is that of Glutathione S-transferase U17 (GSTU17) from Arabidopsis thaliana (Mouse-ear cress).